We begin with the raw amino-acid sequence, 498 residues long: Protein flp (498 aa).

Transmembrane regions (helical) follow at residues 6–26 (LYFL…IYIT), 389–409 (FNIV…FSAY), 433–453 (LSLC…YLIL), and 471–491 (LALI…LLFL).

It is found in the cell membrane. Its function is as follows. Its precise function is unknown. Has no penicillin-binding activity and is not involved in methicillin resistance. The protein is Protein flp (flp) of Staphylococcus aureus (strain COL).